The primary structure comprises 323 residues: tRNA U34 carboxymethyltransferase (323 aa).

Carboxy-S-adenosyl-L-methionine-binding positions include K91, W105, K110, G130, 152–154, 181–182, M196, Y200, and R315; these read DPT and IE.

It belongs to the class I-like SAM-binding methyltransferase superfamily. CmoB family. As to quaternary structure, homotetramer.

It carries out the reaction carboxy-S-adenosyl-L-methionine + 5-hydroxyuridine(34) in tRNA = 5-carboxymethoxyuridine(34) in tRNA + S-adenosyl-L-homocysteine + H(+). Catalyzes carboxymethyl transfer from carboxy-S-adenosyl-L-methionine (Cx-SAM) to 5-hydroxyuridine (ho5U) to form 5-carboxymethoxyuridine (cmo5U) at position 34 in tRNAs. The protein is tRNA U34 carboxymethyltransferase of Salmonella gallinarum (strain 287/91 / NCTC 13346).